The primary structure comprises 505 residues: Sucrose porin (505 aa).

The N-terminal stretch at 1–22 (MYKKRKLAILIALLTGTAAAHG) is a signal peptide. A disordered region spans residues 44-94 (ETRASTAESRAASAEQKVQQLTQQQQQTQATTQQVARRTTQLEEKAERPGG). Residues 46–82 (RASTAESRAASAEQKVQQLTQQQQQTQATTQQVARRT) are compositionally biased toward low complexity. Basic and acidic residues predominate over residues 83–93 (TQLEEKAERPG).

The protein belongs to the porin LamB (TC 1.B.3) family. In terms of assembly, homotrimer.

The protein localises to the cell outer membrane. Functionally, porin for sucrose uptake. This is Sucrose porin (scrY) from Klebsiella pneumoniae.